A 2383-amino-acid polypeptide reads, in one-letter code: MSGPNPVPLAIVGIACRFPGDATNPERFWDLLANARSGWSRVPNDRWNEEAFWHPDPDDTNGTNNHMGGHFLNQDLARFDAGFFNVTPQEAASMDPQQRLLLETTYEALESAGIPQEHIRGSNTAAYMAMFTRDYDRNVYKDMMSIPKYHVTGTGDAILANRISHLFDLRGPSVTMDTGCSGGLTAISHACQALRSGLSDIGLAGAVNLILTPDHMVGMSNLHMLNVNGRSFSFDSRGAGYGRGEGVATLVIKRLDDAIRDKDPVRAILRDAAINQDGYTAGITLPSGRAQQALERRVWDVLNLDPATVGYVEAHGTGTLAGDSAELEGISKIFCENRDHGSPLIVGSVKSNIGHTECVSGIAAVIKSTLILENGTIPPNINFEQPRESLDLRNKKIKVPNALMPWPQTTGTARISVNSFGYGGTNAHAVLERAERVIDTTCPQEDDAPQLFIFSAASQTSLLGMLAANRDWVSENRERAWVMRDLAYTLSQRRSLLPWRFSCVAANRSELLETLSSVPQNANSIARITPGSRISFIFTGQGAQWAGMGRELLSMPTFNSSLQRSNEILQDLGCSWDLIEEVSKQKPESRLHEPELSQPLTTAIQIALVDLFREWGIVPDSVIGHSSGEIGAAYTAGHIAHCQAIKVAYFRGFSSAWAAQAHKRGAMLAVGLGEYDVEPYLEQLGQGHASIACQNSPNSTTVSGDDAAISELSEILTKESIFNRKLNITVAYHSHHMQTAACQYKAALEPLLTNPSLDTGIEMFSTVTGSIKKDAFNSNYWVENLVSKVRFCDGLQALCESTQASPLGSSKAERIFIEIGPHSALAGPTRQCIADLITPLPYSYTSGLLRETGAVKSALAMVGHIFNRGYSLNLAAISASNKTSQYATVLSNLPSYHWDHTRRHWNESRISREYRFRKHPYHDLLGLRMTEVSPLRPSWRHMIGTKGLPWLADHVVDDLVIFPGSGYLAMAIEACSQLADDRYPGREIERFSLNDIFFLKGLIIPDDGARVEVQLSLNPIEPADKDTRMNVMQHEFSVTAFTDEARWNEHCRGNIVVVFKTSSATERLVANGFTRGDMAAQLDPVSGKLTHAGQLYPELRKAGNSYGLTFNGIQRMKIGADSASSDVIIPDVVSRMPACHMRPHIIHPTTLDILLHTTLPLVHQKLGVGSVMPVHIRNMDVSADIESTPRKMFRVVTTLTSSHARAADTELFVFSEEGHVDDTPVVSAAGMELRSFVARDSNDAGSSDGHRDICSELKWIPDERFITAKHLQVLQPSILTKDALARCYALMAQYLKQMAIKHSDLSVLELGGDDTTSGATKTFLEVFHAGGTAPAMYDFCTSLKDFDVIQRKLEAFDCEKVHKMEMKRIELDAVSENRYDVVLSCNTIYNAADVKSVLSHARKLLKLDGVLLFVEDMSSRESRSSSEWSKLMSEASFKMQLAVTDNDATRQLTFFATRAVEDAIASVHNVSIVSGCNLPLHIQNFLPQIESELGSKGMQVTRSRWDKLPPNGTDIYIIVDDGSRPILSGINQDRFRIVTGLLQKTARIIWLSVQDDETFRFNPRKHLITGLSRTAHAENEGLDMVTIDVQETLNQKTQPEVIGFLSQVVGLFDCKHITREREYVYNGTDILIPRLIPHQRLNLQVSGKIGTSIEAMAFTNSSVPLKLSDGQNRLVFVENMDHKQALCHDYVEIETKAVGLPPGFNGVQSGNTVYEYAGIIIAVGSEVSTLKAGDRAVAYSSTPCANVLRVPAIQAQLIPSNLSFKDAAAMPRALMAVSHALVHIANVQPGQVVFVDDAATEIGLAAICVAQNLGSTLIAAVSTKEEAAFIKNTFKVPSRHIVPRDSYFGQRQVRTLVRPNGGLDVILGCGKSPVTAVTSELLKPFGLLVHVRNRASDPKRYDGTGYPPNLTVASFDIDSLLQASTKNSAELFQKVMEMVNRGMIPPSQSIVAIEAGIKIEEAISLAQKQGSMKKCVLEFNENSIVNVETSFHHIPSLKPHATYVVAGGLGDLGQRLLRLMAQAGARHLVSLSRKGAGSKEFRGLEKELKGVHPGCSLLAIDCDILREESVSAALAEIKQQGFPTVKGVVQSAVILKDATLDSMTAELFNSVVSVKAEGTLNLHRVFIQEELAFFISFSSVMSIIGGKAQANYNAGNAVQDAFAQFERRNPHCFYMSLNIGGIKDAAVNNDAIVQSIRRQGLTQISHEELSSYLKYAFSDDARKTGCKQPVIGFTAETIVSTTAVNGTAHTPMFTHVRQKPTAKTTVGNVNEKRSFKDIVNSGTNKGEISEFVARSICDKIADLTGIDLAEVNLDSGISDYGLDSLVSIELRNWLMREFDSPIQSSEVLDSHGIRDLAQKVVSRSRLVTTETDVVHTVNGEAPT.

In terms of domain architecture, Ketosynthase family 3 (KS3) spans 6 to 433; that stretch reads PVPLAIVGIA…GTNAHAVLER (428 aa). Catalysis depends on for beta-ketoacyl synthase activity residues Cys180, His315, and His355. Residues 536-828 form a malonyl-CoA:ACP transacylase (MAT) domain region; sequence FIFTGQGAQW…IGPHSALAGP (293 aa). The For malonyltransferase activity role is filled by Ser626. An N-terminal hotdog fold region spans residues 922-1062; that stretch reads HDLLGLRMTE…GNIVVVFKTS (141 aa). Positions 922 to 1239 are dehydratase (DH) domain; sequence HDLLGLRMTE…GMELRSFVAR (318 aa). One can recognise a PKS/mFAS DH domain in the interval 922-1242; that stretch reads HDLLGLRMTE…LRSFVARDSN (321 aa). Residue His954 is the Proton acceptor; for dehydratase activity of the active site. Residues 1087–1242 form a C-terminal hotdog fold region; that stretch reads GKLTHAGQLY…LRSFVARDSN (156 aa). Asp1152 serves as the catalytic Proton donor; for dehydratase activity. The tract at residues 1669-1977 is enoylreductase (ER) domain; that stretch reads DGQNRLVFVE…KQGSMKKCVL (309 aa). A catalytic ketoreductase (KRc) domain region spans residues 2001-2184; that stretch reads ATYVVAGGLG…MSLNIGGIKD (184 aa). One can recognise a Carrier domain in the interval 2287–2364; it reads EISEFVARSI…DLAQKVVSRS (78 aa). Ser2324 carries the O-(pantetheine 4'-phosphoryl)serine modification.

The protein operates within mycotoxin biosynthesis. Highly reducing polyketide synthase; part of the satratoxin SC2 cluster involved in the biosynthesis of satratoxins, trichothecene mycotoxins that are associated with human food poisonings. Satratoxins are suggested to be made by products of multiple gene clusters (SC1, SC2 and SC3) that encode 21 proteins in all, including polyketide synthases, acetyltransferases, and other enzymes expected to modify the trichothecene skeleton. SC1 encodes 10 proteins, SAT1 to SAT10. The largest are SAT8, which encodes a putative polyketide synthase (PKS) with a conventional non-reducing architecture, and SAT10, a putative protein containing four ankyrin repeats and thus may be involved in protein scaffolding. The putative short-chain reductase SAT3 may assist the PKS in some capacity. SAT6 contains a secretory lipase domain and acts probably as a trichothecene esterase. SAT5 encodes a putative acetyltransferase, and so, with SAT6, may affect endogenous protection from toxicity. The probable transcription factor SAT9 may regulate the expression of the SC1 cluster. SC2 encodes proteins SAT11 to SAT16, the largest of which encodes the putative reducing PKS SAT13. SAT11 is a cytochrome P450 monooxygenase, while SAT14 and SAT16 are probable acetyltransferases. The SC2 cluster may be regulated by the transcription factor SAT15. SC3 is a small cluster that encodes 5 proteins, SAT17 to SAT21. SAT21 is a putative MFS-type transporter which may have a role in exporting secondary metabolites. The four other proteins putatively encoded in SC3 include the taurine hydroxylase-like protein SAT17, the O-methyltransferase SAT18, the acetyltransferase SAT19, and the Cys6-type zinc finger SAT20, the latter being probably involved in regulation of SC3 expression. The sequence is that of Highly reducing polyketide synthase SAT13 from Stachybotrys chartarum (strain CBS 109288 / IBT 7711) (Toxic black mold).